We begin with the raw amino-acid sequence, 230 residues long: Large ribosomal subunit protein uL1 (230 aa).

The protein belongs to the universal ribosomal protein uL1 family. As to quaternary structure, part of the 50S ribosomal subunit.

Binds directly to 23S rRNA. The L1 stalk is quite mobile in the ribosome, and is involved in E site tRNA release. Functionally, protein L1 is also a translational repressor protein, it controls the translation of the L11 operon by binding to its mRNA. This Gluconobacter oxydans (strain 621H) (Gluconobacter suboxydans) protein is Large ribosomal subunit protein uL1.